The chain runs to 127 residues: Small ribosomal subunit protein uS12 (127 aa).

Position 89 is a 3-methylthioaspartic acid (Asp89).

The protein belongs to the universal ribosomal protein uS12 family. Part of the 30S ribosomal subunit. Contacts proteins S8 and S17. May interact with IF1 in the 30S initiation complex.

Functionally, with S4 and S5 plays an important role in translational accuracy. Interacts with and stabilizes bases of the 16S rRNA that are involved in tRNA selection in the A site and with the mRNA backbone. Located at the interface of the 30S and 50S subunits, it traverses the body of the 30S subunit contacting proteins on the other side and probably holding the rRNA structure together. The combined cluster of proteins S8, S12 and S17 appears to hold together the shoulder and platform of the 30S subunit. This chain is Small ribosomal subunit protein uS12, found in Campylobacter lari (strain RM2100 / D67 / ATCC BAA-1060).